We begin with the raw amino-acid sequence, 215 residues long: Probable phosphoglycerate mutase GpmB (215 aa).

Substrate contacts are provided by residues 8–15, 21–22, Arg-58, Arg-60, 82–85, 104–105, and 151–152; these read RHGETQWN, QG, ELNM, RR, and GI. His-9 serves as the catalytic Tele-phosphohistidine intermediate. Glu-82 serves as the catalytic Proton donor/acceptor.

This sequence belongs to the phosphoglycerate mutase family. GpmB subfamily.

It carries out the reaction (2R)-2-phosphoglycerate = (2R)-3-phosphoglycerate. The protein operates within carbohydrate degradation; glycolysis; pyruvate from D-glyceraldehyde 3-phosphate: step 3/5. The polypeptide is Probable phosphoglycerate mutase GpmB (Escherichia coli O1:K1 / APEC).